The chain runs to 82 residues: EMBRYO SURROUNDING FACTOR 1-like protein 10 (82 aa).

An N-terminal signal peptide occupies residues 1 to 22 (MSSLYFAILCLFMIFLVPLHEF). Intrachain disulfides connect cysteine 39–cysteine 55, cysteine 44–cysteine 74, cysteine 53–cysteine 70, and cysteine 56–cysteine 63.

It belongs to the MEG family. In terms of tissue distribution, expressed in stems, leaves and flowers.

The polypeptide is EMBRYO SURROUNDING FACTOR 1-like protein 10 (ESFL10) (Arabidopsis thaliana (Mouse-ear cress)).